The following is a 456-amino-acid chain: Serine/threonine-protein kinase PBS1 (456 aa).

The tract at residues 1-57 (MGCFSCFDSSDDEKLNPVDESNHGQKKQSQPTVSNNISGLPSGGEKLSSKTNGGSKR) is disordered. Residue Gly2 is the site of N-myristoyl glycine attachment. 2 S-palmitoyl cysteine lipidation sites follow: Cys3 and Cys6. Positions 12 to 23 (DEKLNPVDESNH) are enriched in basic and acidic residues. Ser21 bears the Phosphoserine mark. The span at 27–39 (KQSQPTVSNNISG) shows a compositional bias: polar residues. Residues 86-363 (FHPDTFLGEG…ADVVTALSYL (278 aa)) enclose the Protein kinase domain. ATP-binding positions include 92 to 100 (LGEGGFGRV) and Lys115. Tyr160 carries the post-translational modification Phosphotyrosine. Asp213 serves as the catalytic Proton acceptor. Ser217 and Ser247 each carry phosphoserine. 2 positions are modified to phosphothreonine: Thr248 and Thr253. A Phosphotyrosine modification is found at Tyr261. Positions 292–296 (SEMPH) match the Recognition motif required for RPS5-mediated plant resistance to P.syringae motif. The disordered stretch occupies residues 368–456 (YDPSKDDSRR…QGTSESNSTG (89 aa)). Composition is skewed to basic and acidic residues over residues 370–392 (PSKDDSRRNRDERGARLITRNDD) and 400–429 (FDLEGSEKEDSPRETARILNRDINRERAVA). Positions 446–456 (EQGTSESNSTG) are enriched in polar residues.

This sequence belongs to the protein kinase superfamily. Ser/Thr protein kinase family. As to quaternary structure, in infected plant cells, it interacts with the P.syringae virulence protein avrPphB. In uninfected plants, autophosphorylated form interacts with RPS5. Interacts with FLS2. Post-translationally, cleaved by avrPphB in infected plant cells. Its cleavage serves as a signal that triggers the RPS5-mediated defense system. Autophosphorylates. Autophosphorylation may be required to trigger the RPS5-mediated plant defense system. In terms of processing, palmitoylation at Cys-3 and Cys-6 are required for plasma membrane location that is essential for the RPS5-mediated plant defense response.

The protein resides in the cell membrane. It carries out the reaction L-seryl-[protein] + ATP = O-phospho-L-seryl-[protein] + ADP + H(+). It catalyses the reaction L-threonyl-[protein] + ATP = O-phospho-L-threonyl-[protein] + ADP + H(+). Functionally, protein kinase required for plant defense mechanism mediated by the disease resistance (R) protein RPS5. In case of infection by Pseudomonas syringae, AvrPphB triggers RPS5-mediated defense mechanism via the cleavage of PBS1. Both kinase activity and cleavage by avrPphB are independently required to trigger the RPS5-mediated resistance. Contributes to PAMP-triggered immunity (PTI) signaling and defense responses downstream of FLS2. The polypeptide is Serine/threonine-protein kinase PBS1 (Arabidopsis thaliana (Mouse-ear cress)).